A 75-amino-acid chain; its full sequence is Protein Tlp homolog (75 aa).

Residues 52-75 (RREALDGMREEIKDEARDKKNGYM) are disordered.

It belongs to the Tlp family.

The polypeptide is Protein Tlp homolog (Clostridium botulinum (strain Okra / Type B1)).